We begin with the raw amino-acid sequence, 271 residues long: 4-hydroxy-tetrahydrodipicolinate reductase (271 aa).

NAD(+) contacts are provided by residues 11-16 (GGSGRM) and Glu-37. Residue Arg-38 coordinates NADP(+). Residues 101 to 103 (GTT) and 125 to 128 (APNM) contribute to the NAD(+) site. The Proton donor/acceptor role is filled by His-158. His-159 provides a ligand contact to (S)-2,3,4,5-tetrahydrodipicolinate. Lys-162 serves as the catalytic Proton donor. 168-169 (GT) serves as a coordination point for (S)-2,3,4,5-tetrahydrodipicolinate.

It belongs to the DapB family.

The protein resides in the cytoplasm. The catalysed reaction is (S)-2,3,4,5-tetrahydrodipicolinate + NAD(+) + H2O = (2S,4S)-4-hydroxy-2,3,4,5-tetrahydrodipicolinate + NADH + H(+). It catalyses the reaction (S)-2,3,4,5-tetrahydrodipicolinate + NADP(+) + H2O = (2S,4S)-4-hydroxy-2,3,4,5-tetrahydrodipicolinate + NADPH + H(+). It functions in the pathway amino-acid biosynthesis; L-lysine biosynthesis via DAP pathway; (S)-tetrahydrodipicolinate from L-aspartate: step 4/4. Functionally, catalyzes the conversion of 4-hydroxy-tetrahydrodipicolinate (HTPA) to tetrahydrodipicolinate. This Shewanella halifaxensis (strain HAW-EB4) protein is 4-hydroxy-tetrahydrodipicolinate reductase.